Consider the following 320-residue polypeptide: Mechanosensory protein 3 (320 aa).

2 consecutive LIM zinc-binding domains span residues cysteine 29–histidine 79 and cysteine 89–histidine 145. Residues arginine 216–lysine 275 constitute a DNA-binding region (homeobox).

It localises to the nucleus. Specifies differentiation of the set of six touch receptor neurons. Binds cooperatively as a heterodimer with unc-86 to sites in the mec-3 gene promoter. This chain is Mechanosensory protein 3 (mec-3), found in Caenorhabditis remanei (Caenorhabditis vulgaris).